A 111-amino-acid chain; its full sequence is uncharacterized protein (111 aa).

The segment at methionine 1–leucine 85 is disordered. The span at leucine 11–glutamine 23 shows a compositional bias: polar residues. Positions serine 24–serine 42 are enriched in low complexity. Residues alanine 56 to serine 77 are compositionally biased toward polar residues.

This is an uncharacterized protein from Microplitis demolitor (Parasitoid wasp).